The sequence spans 716 residues: Fatty acid oxidation complex subunit alpha (716 aa).

The enoyl-CoA hydratase/isomerase stretch occupies residues 1 to 189; sequence MIYQSPTIQV…KVGAVDAVVA (189 aa). Asp296 provides a ligand contact to substrate. The interval 311–716 is 3-hydroxyacyl-CoA dehydrogenase; it reads KEVKNAAVLG…ATNNGSYYQA (406 aa). NAD(+) contacts are provided by residues Met324, Asp343, 400–402, Lys407, and Ser429; that span reads VVE. The active-site For 3-hydroxyacyl-CoA dehydrogenase activity is the His450. Asn453 provides a ligand contact to NAD(+). Residues Asn500 and Tyr660 each coordinate substrate.

This sequence in the N-terminal section; belongs to the enoyl-CoA hydratase/isomerase family. In the C-terminal section; belongs to the 3-hydroxyacyl-CoA dehydrogenase family. In terms of assembly, heterotetramer of two alpha chains (FadB) and two beta chains (FadA).

It catalyses the reaction a (3S)-3-hydroxyacyl-CoA + NAD(+) = a 3-oxoacyl-CoA + NADH + H(+). The catalysed reaction is a (3S)-3-hydroxyacyl-CoA = a (2E)-enoyl-CoA + H2O. The enzyme catalyses a 4-saturated-(3S)-3-hydroxyacyl-CoA = a (3E)-enoyl-CoA + H2O. It carries out the reaction (3S)-3-hydroxybutanoyl-CoA = (3R)-3-hydroxybutanoyl-CoA. It catalyses the reaction a (3Z)-enoyl-CoA = a 4-saturated (2E)-enoyl-CoA. The catalysed reaction is a (3E)-enoyl-CoA = a 4-saturated (2E)-enoyl-CoA. Its pathway is lipid metabolism; fatty acid beta-oxidation. Involved in the aerobic and anaerobic degradation of long-chain fatty acids via beta-oxidation cycle. Catalyzes the formation of 3-oxoacyl-CoA from enoyl-CoA via L-3-hydroxyacyl-CoA. It can also use D-3-hydroxyacyl-CoA and cis-3-enoyl-CoA as substrate. This is Fatty acid oxidation complex subunit alpha from Shewanella putrefaciens (strain CN-32 / ATCC BAA-453).